The following is a 689-amino-acid chain: MAAATASPRSLLVLLQVVVLALAQIRGPPGERGPPGPPGPPGVPGSDGIDGDNGPPGKAGPPGPKGEPGKAGPDGPDGKPGIDGLTGAKGEPGPMGIPGVKGQPGLPGPPGLPGPGFAGPPGPPGPVGLPGEIGIRGPKGDPGPDGPSGPPGPPGKPGRPGTIQGLEGSADFLCPTNCPPGMKGPPGLQGVKGHAGKRGILGDPGHQGKPGPKGDVGASGEQGIPGPPGPQGIRGYPGMAGPKGETGPHGYKGMVGAIGATGPPGEEGPRGPPGRAGEKGDEGSPGIRGPQGITGPKGATGPPGINGKDGTPGTPGMKGSAGQAGQPGSPGHQGLAGVPGQPGTKGGPGDQGEPGPQGLPGFSGPPGKEGEPGPRGEIGPQGIMGQKGDQGERGPVGQPGPQGRQGPKGEQGPPGIPGPQGLPGVKGDKGSPGKTGPRGKVGDPGVAGLPGEKGEKGESGEPGPKGQQGVRGEPGYPGPSGDAGAPGVQGYPGPPGPRGLAGNRGVPGQPGRQGVEGRDATDQHIVDVALKMLQEQLAEVAVSAKREALGAVGMMGPPGPPGPPGYPGKQGPHGHPGPRGVPGIVGAVGQIGNTGPKGKRGEKGDPGEVGRGHPGMPGPPGIPGLPGRPGQAINGKDGDRGSPGAPGEAGRPGLPGPVGLPGFCEPAACLGASAYASARLTEPGSIKGP.

A signal peptide spans 1 to 23 (MAAATASPRSLLVLLQVVVLALA). The disordered stretch occupies residues 26 to 518 (RGPPGERGPP…QPGRQGVEGR (493 aa)). A triple-helical region 4 (COL4) region spans residues 27–163 (GPPGERGPPG…PGKPGRPGTI (137 aa)). Residues 31–43 (ERGPPGPPGPPGV) show a composition bias toward pro residues. Residues 44-56 (PGSDGIDGDNGPP) show a composition bias toward low complexity. 2 stretches are compositionally biased toward pro residues: residues 106–127 (LPGPPGLPGPGFAGPPGPPGPV) and 144–157 (PDGPSGPPGPPGKP). Position 160 is a 4-hydroxyproline (P160). Positions 164–180 (QGLEGSADFLCPTNCPP) are nonhelical region 4 (NC4). O-linked (Xyl...) (glycosaminoglycan) serine glycosylation is present at S169. Positions 181-519 (GMKGPPGLQG…PGRQGVEGRD (339 aa)) are triple-helical region 3 (COL3). The residue at position 183 (K183) is a 5-hydroxylysine. K183 is a glycosylation site (O-linked (Gal...) hydroxylysine). Over residues 343 to 352 (GTKGGPGDQG) the composition is skewed to gly residues. 2 stretches are compositionally biased toward low complexity: residues 353 to 366 (EPGPQGLPGFSGPP) and 393 to 413 (RGPVGQPGPQGRQGPKGEQGP). The segment at 520-549 (ATDQHIVDVALKMLQEQLAEVAVSAKREAL) is nonhelical region 3 (NC3). The segment at 550–632 (GAVGMMGPPG…PGLPGRPGQA (83 aa)) is triple-helical region 2 (COL2). The segment at 554-663 (MMGPPGPPGP…LPGPVGLPGF (110 aa)) is disordered. Residues 557 to 566 (PPGPPGPPGY) show a composition bias toward pro residues. Residues 599-611 (KRGEKGDPGEVGR) show a composition bias toward basic and acidic residues. The nonhelical region 2 (NC2) stretch occupies residues 633-634 (IN). The segment at 635–664 (GKDGDRGSPGAPGEAGRPGLPGPVGLPGFC) is triple-helical region 1 (COL1). A nonhelical region 1 (NC1) region spans residues 665-689 (EPAACLGASAYASARLTEPGSIKGP).

Belongs to the fibril-associated collagens with interrupted helices (FACIT) family. Heterotrimer of an alpha 1(IX), an alpha 2(IX) and an alpha 3(IX) chain. The chains are linked to each other by interchain disulfide bonds. Trimers are also cross-linked via hydroxylysines. Covalently linked to the telopeptides of type II collagen by lysine-derived cross-links. In terms of processing, prolines at the third position of the tripeptide repeating unit (G-X-Y) are hydroxylated in some or all of the chains.

It is found in the secreted. The protein resides in the extracellular space. The protein localises to the extracellular matrix. In terms of biological role, structural component of hyaline cartilage and vitreous of the eye. The protein is Collagen alpha-2(IX) chain of Homo sapiens (Human).